The chain runs to 151 residues: Transcriptional regulator MraZ (151 aa).

SpoVT-AbrB domains are found at residues 5 to 51 (AHEL…PVAE) and 81 to 124 (AEIL…GREQ).

The protein belongs to the MraZ family. In terms of assembly, forms oligomers.

The protein localises to the cytoplasm. The protein resides in the nucleoid. In Neisseria meningitidis serogroup A / serotype 4A (strain DSM 15465 / Z2491), this protein is Transcriptional regulator MraZ.